The primary structure comprises 353 residues: D-alanine--D-alanine ligase (353 aa).

The region spanning 141-349 is the ATP-grasp domain; that stretch reads KAAFAAAGLP…LEELVSQLVI (209 aa). 176–231 serves as a coordination point for ATP; sequence EAKLKYPCFVKPANLGSSVGISKAQNRNELLIGLDKAASLDRRIVVEQGVSARELE. D302, E316, and N318 together coordinate Mg(2+).

It belongs to the D-alanine--D-alanine ligase family. Mg(2+) is required as a cofactor. Mn(2+) serves as cofactor.

The protein localises to the cytoplasm. The enzyme catalyses 2 D-alanine + ATP = D-alanyl-D-alanine + ADP + phosphate + H(+). The protein operates within cell wall biogenesis; peptidoglycan biosynthesis. In terms of biological role, cell wall formation. The polypeptide is D-alanine--D-alanine ligase (Prochlorococcus marinus (strain MIT 9313)).